The sequence spans 397 residues: Tryptophan synthase beta chain 1 (397 aa).

The residue at position 90 (lysine 90) is an N6-(pyridoxal phosphate)lysine.

The protein belongs to the TrpB family. Tetramer of two alpha and two beta chains. Requires pyridoxal 5'-phosphate as cofactor.

It carries out the reaction (1S,2R)-1-C-(indol-3-yl)glycerol 3-phosphate + L-serine = D-glyceraldehyde 3-phosphate + L-tryptophan + H2O. Its pathway is amino-acid biosynthesis; L-tryptophan biosynthesis; L-tryptophan from chorismate: step 5/5. Functionally, the beta subunit is responsible for the synthesis of L-tryptophan from indole and L-serine. This is Tryptophan synthase beta chain 1 (trpB1) from Aquifex aeolicus (strain VF5).